A 252-amino-acid chain; its full sequence is tRNA (guanine-N(1)-)-methyltransferase (252 aa).

Residues G113 and 133–138 (IGDYVL) contribute to the S-adenosyl-L-methionine site.

This sequence belongs to the RNA methyltransferase TrmD family. In terms of assembly, homodimer.

It localises to the cytoplasm. The catalysed reaction is guanosine(37) in tRNA + S-adenosyl-L-methionine = N(1)-methylguanosine(37) in tRNA + S-adenosyl-L-homocysteine + H(+). Specifically methylates guanosine-37 in various tRNAs. This chain is tRNA (guanine-N(1)-)-methyltransferase, found in Xanthomonas campestris pv. campestris (strain B100).